The primary structure comprises 318 residues: L-carnitine dehydrogenase (318 aa).

NAD(+) is bound at residue 14–19; it reads GAGVIG.

It belongs to the 3-hydroxyacyl-CoA dehydrogenase family. L-carnitine dehydrogenase subfamily. In terms of assembly, homodimer.

It localises to the cytoplasm. The enzyme catalyses carnitine + NAD(+) = 3-dehydrocarnitine + NADH + H(+). It participates in amine and polyamine metabolism; carnitine metabolism. Catalyzes the NAD(+)-dependent oxidation of L-carnitine to 3-dehydrocarnitine. This is L-carnitine dehydrogenase from Streptomyces coelicolor (strain ATCC BAA-471 / A3(2) / M145).